A 596-amino-acid polypeptide reads, in one-letter code: Fructan 1-exohydrolase w3 (596 aa).

An N-terminal signal peptide occupies residues Met-1–Ser-20. The active site involves Asp-75. Residues Asn-168, Asn-236, and Asn-248 are each glycosylated (N-linked (GlcNAc...) asparagine). The cysteines at positions 446 and 492 are disulfide-linked.

It belongs to the glycosyl hydrolase 32 family. In terms of tissue distribution, expressed in the stem, particularly the penultimate internode. Little expression is detected in roots and in the peduncle part of the stem.

It catalyses the reaction Hydrolysis of terminal, non-reducing (2-&gt;1)-linked beta-D-fructofuranose residues in fructans.. Inhibited by sucrose. In terms of biological role, hydrolyzes inulin-type beta-(2,1)-fructans and beta-(2,1)-linkages in branched fructans. Has low activity against beta-(2,6)-linked fructans. May play a role as a beta-(2,1)-trimmer during graminan biosynthesis. This is Fructan 1-exohydrolase w3 from Triticum aestivum (Wheat).